We begin with the raw amino-acid sequence, 223 residues long: MATRKAAKTKANGPAHVPSGPSQVLAVVYGTLLLVYLRFIFSAGITHDPAKVMTQALPGLLLLHMGYCVVVLGNKPGRKIGTDVSTAMIAAALSVFFSVIIFGLLVLFGAPAISLVHNTFVCAMHMSILAVLPLFFTYHLDSKVWADIIAMRRPLDHVYAASVCTLIGAWLGAIPIPYDWDRPWQQWPITILAGAYLGYFVGTLGGIALELTKSLCSKTKKTE.

The next 6 helical transmembrane spans lie at 25–45, 52–72, 88–108, 120–140, 158–178, and 189–209; these read LAVVYGTLLLVYLRFIFSAGI, VMTQALPGLLLLHMGYCVVVL, MIAAALSVFFSVIIFGLLVLF, FVCAMHMSILAVLPLFFTYHL, VYAASVCTLIGAWLGAIPIPY, and ITILAGAYLGYFVGTLGGIAL.

Belongs to the PIGF family.

The protein localises to the endoplasmic reticulum membrane. It functions in the pathway glycolipid biosynthesis; glycosylphosphatidylinositol-anchor biosynthesis. Functionally, acts in the GPI biosynthetic pathway between GlcNAc-PI synthesis and GPI transfer to protein. This is Glycosylphosphatidylinositol anchor biosynthesis protein 11 (GPI11) from Yarrowia lipolytica (strain CLIB 122 / E 150) (Yeast).